The primary structure comprises 156 residues: Small ribosomal subunit protein uS7 (156 aa).

Belongs to the universal ribosomal protein uS7 family. In terms of assembly, part of the 30S ribosomal subunit. Contacts proteins S9 and S11.

One of the primary rRNA binding proteins, it binds directly to 16S rRNA where it nucleates assembly of the head domain of the 30S subunit. Is located at the subunit interface close to the decoding center, probably blocks exit of the E-site tRNA. This is Small ribosomal subunit protein uS7 from Bacillus mycoides (strain KBAB4) (Bacillus weihenstephanensis).